The following is a 512-amino-acid chain: Gustatory and odorant receptor 63a (512 aa).

Residues 1–24 (MRPSGEKVVKGHGQGNSGHSLSGM) form a disordered region. Residues 1 to 129 (MRPSGEKVVK…PARAKFEMNS (129 aa)) are Cytoplasmic-facing. Residues 130–150 (ASFIYSVVFFVLLACYVGYVA) traverse the membrane as a helical segment. At 151-166 (NNRIHIVRSLSGPFEE) the chain is on the extracellular side. A helical membrane pass occupies residues 167–187 (AVIAYLFLVNILPIMIIPILW). The Cytoplasmic portion of the chain corresponds to 188–222 (YEARKIAKLFNDWDDFEVLYYQISGHSLPLKLRQK). Residues 223–243 (AVYIAIVLPILSVLSVVITHV) traverse the membrane as a helical segment. Topologically, residues 244 to 265 (TMSDLNINQVVPYCILDNLTAM) are extracellular. Asn-261 is a glycosylation site (N-linked (GlcNAc...) asparagine). Residues 266-285 (LGAWWFLICEAMSITAHLLA) traverse the membrane as a helical segment. The Cytoplasmic segment spans residues 286-324 (ERFQKALKHIGPAAMVADYRVLWLRLSKLTRDTGNALCY). The helical transmembrane segment at 325-345 (TFVFMSLYLFFIITLSIYGLM) threads the bilayer. Topologically, residues 346 to 350 (SQLSE) are extracellular. Residues 351–371 (GFGIKDIGLTITALWNIGLLF) form a helical membrane-spanning segment. The Cytoplasmic portion of the chain corresponds to 372-436 (YICDEAHYAS…FFDVNRTLFK (65 aa)). A helical transmembrane segment spans residues 437–457 (GLLTTMVTYLVVLLQFQISIP). Residues 458–512 (TDKGDSEGANNITVVDFVMDSLDNDMSLMGASTLSTTTVGTTLPPPIMKLKGRKG) lie on the Extracellular side of the membrane. An N-linked (GlcNAc...) asparagine glycan is attached at Asn-468.

It belongs to the insect chemoreceptor superfamily. Gustatory receptor (GR) family. Gr21a subfamily. As to quaternary structure, gr21a and Gr63a probably form a heterodimer that responds to CO(2). As to expression, expressed in the medial aspect of the third antennal segment. Carbon dioxide-responsive neurons coexpress Gr21a and Gr63a in a pair of chemosensory receptors at both larval and adult life stages.

Its subcellular location is the cell membrane. Its function is as follows. Gustatory and odorant receptor which mediates acceptance or avoidance behavior, depending on its substrates. Gr21a and Gr63a together are sufficient for carbon dioxide detection and avoidance behavior. It is possible that the CO(2) receptors Gr63a and Gr21a activate the TRPC channels through Galpha49B and Plc21C. This innate olfactory avoidance behavior can be inhibited by inhibitory interactions of the odors such as 1-hexanol and 2,3-butanedione with Gr21a and Gr63a. The protein is Gustatory and odorant receptor 63a (Gr63a) of Drosophila melanogaster (Fruit fly).